The chain runs to 481 residues: Sialic acid-binding Ig-like lectin 16 (481 aa).

A signal peptide spans 1–16 (MLLLPLLLPVLGAGSL). Topologically, residues 17-434 (NKDPSYSLQV…VHCKSGPMTG (418 aa)) are extracellular. Residues 19–122 (DPSYSLQVQR…DEAWYFFRVE (104 aa)) form the Ig-like V-type domain. 4 disulfide bridges follow: Cys37–Cys174, Cys42–Cys102, Cys165–Cys216, and Cys259–Cys306. Residues Asn43 and Asn78 are each glycosylated (N-linked (GlcNAc...) asparagine). Arg120 contacts N-acetylneuraminate. Ig-like C2-type domains are found at residues 147–232 (PDVY…RTVR), 238–322 (LELQ…LDLS), and 327–424 (PENL…LSFS). 2 N-linked (GlcNAc...) asparagine glycosylation sites follow: Asn338 and Asn347. Residues Cys363 and Cys408 are joined by a disulfide bond. A helical membrane pass occupies residues 435-455 (VVLVAVGEVAMKILLLCLCLI). Residues 456–481 (LLRVRSCRRKAARAALGMEAADAVTD) are Cytoplasmic-facing.

Belongs to the immunoglobulin superfamily. SIGLEC (sialic acid binding Ig-like lectin) family. In terms of tissue distribution, expressed in bone marrow, fetal brain, fetal liver, lung and salivary gland. Detected in brain, macrophage, cancerous esophagus and lung at protein level.

Its subcellular location is the membrane. Putative adhesion molecule that mediates sialic-acid dependent binding to cells. This Homo sapiens (Human) protein is Sialic acid-binding Ig-like lectin 16 (SIGLEC16).